A 1281-amino-acid chain; its full sequence is Protein ETHYLENE-INSENSITIVE 2 (1281 aa).

Topologically, residues 1 to 21 are cytoplasmic; sequence MDGQQLRSSESPASGGGGVTG. A helical membrane pass occupies residues 22–42; that stretch reads GGAPHLFHALGPALLISIGYI. Residues 43–61 lie on the Extracellular side of the membrane; the sequence is DLGKWVAAVEAGSRFGLDL. A helical transmembrane segment spans residues 62 to 82; that stretch reads VLLALLFNFMAILCQYLAACI. Topologically, residues 83-112 are cytoplasmic; it reads GTVTGRSLAEICHQEYSRPTCIFLGVQAGL. The helical transmembrane segment at 113 to 133 threads the bilayer; sequence SLLTSELTMIFGIALGFNLLF. Residues 134 to 137 are Extracellular-facing; sequence EYDD. Residues 138–158 traverse the membrane as a helical segment; the sequence is LITGICFATVVPNLLPYAISH. Residues 159 to 163 lie on the Cytoplasmic side of the membrane; that stretch reads LGKKM. The chain crosses the membrane as a helical span at residues 164-184; that stretch reads VGTLNACIAGFALLCYVLGLL. Residues 185-208 are Extracellular-facing; that stretch reads VSQPQIPLTTNVIFPKLSGESAYS. Residues 209–229 form a helical membrane-spanning segment; sequence LMALLGANVMAHNFYIHSSVV. The Cytoplasmic segment spans residues 230-238; that stretch reads QGQKRSAFA. Residues 239 to 259 traverse the membrane as a helical segment; the sequence is VGALFHDHLFSVLFIFTGIFL. At 260–297 the chain is on the extracellular side; that stretch reads VNHVLMNSAAADSTNTLLLTFQDVVELMNQIFVNPMAP. Residues 298–318 traverse the membrane as a helical segment; that stretch reads TIFLVVLLFSSHIISLTSAIG. Over 319 to 325 the chain is Cytoplasmic; it reads SQVISQH. The chain crosses the membrane as a helical span at residues 326 to 346; sequence LFGINLPLSGHHLILKAFAIV. The Extracellular portion of the chain corresponds to 347 to 362; sequence PALYCAKVAGAEGIYQ. A helical transmembrane segment spans residues 363–383; that stretch reads LLIICQIIQAMLLPSSVVPLF. At 384 to 400 the chain is on the cytoplasmic side; the sequence is RVASSRLIMGAHRVSLH. Residues 401–421 form a helical membrane-spanning segment; it reads LEILTFLAFLLMLFSNIIFMA. At 422–447 the chain is on the extracellular side; sequence EMLFGDSGWLNTLKGNTGSPVVFPST. The chain crosses the membrane as a helical span at residues 448–468; that stretch reads VLITVACVSVAFSLYMAVTPL. Residues 469–1281 are Cytoplasmic-facing; it reads KSGSHEAELQ…KRRLSSKGQQ (813 aa). Disordered regions lie at residues 540 to 565 and 593 to 665; these read IESD…SPSF and ESTV…NGSG. The span at 548–557 shows a compositional bias: polar residues; that stretch reads HSTAHTSTAP. Residues 599 to 610 show a composition bias toward basic and acidic residues; it reads VDSKSTGERDIE.

Belongs to the NRAMP (TC 2.A.55) family. Expressed in roots, leaf sheaths, leaf blades, flowers, developing seeds, germinating seeds and young seedlings. Expressed in adventitious roots, vascular tissues of the seminal roots, lateral roots, the connecting region between vascular tissues and lateral roots, mature leaf, mature stem, tips of adventitious roots derived from the node, shoot apex, young panicle, anthers, pistil, stigma, ovary, seed coat and fruit coat pericarp.

Its subcellular location is the membrane. In terms of biological role, central factor in ethylene signaling pathways that control development, senescence and grain size. Acts as a positive component of the ethylene-signaling pathway. This chain is Protein ETHYLENE-INSENSITIVE 2, found in Oryza sativa subsp. japonica (Rice).